Reading from the N-terminus, the 98-residue chain is Exopolysaccharide production repressor protein (98 aa).

2 helical membrane passes run 6 to 26 (VFLS…YLNG) and 35 to 55 (TLIC…FLVW). Positions 73–98 (AEAANDEKQPGKVSLRRLNRPHHLNS) are disordered. Positions 86 to 98 (SLRRLNRPHHLNS) are enriched in basic residues.

The protein resides in the cell membrane. Its pathway is glycan metabolism; exopolysaccharide biosynthesis. Inhibition of exopolysaccharide synthesis (EPS) and nodulation ability (NOD). The protein is Exopolysaccharide production repressor protein (exoX) of Rhizobium meliloti (strain 1021) (Ensifer meliloti).